The primary structure comprises 187 residues: UPF0301 protein Cpar_0662 (187 aa).

The protein belongs to the UPF0301 (AlgH) family.

This chain is UPF0301 protein Cpar_0662, found in Chlorobaculum parvum (strain DSM 263 / NCIMB 8327) (Chlorobium vibrioforme subsp. thiosulfatophilum).